The sequence spans 362 residues: Microfibril-associated glycoprotein 3 (362 aa).

An N-terminal signal peptide occupies residues 1–19 (MKLHCCLFTLVASIIVPAA). Over 20-146 (FVLEDVDFNQ…TLRVIFTSGD (127 aa)) the chain is Extracellular. N-linked (GlcNAc...) asparagine glycosylation is found at Asn36, Asn41, and Asn110. An Ig-like C2-type domain is found at 45-137 (PSSFELSASS…SPIRASYSVT (93 aa)). An intrachain disulfide couples Cys73 to Cys124. The helical transmembrane segment at 147–167 (MSVYYMIVCLIAFTITLILNV) threads the bilayer. At 168-362 (TRLCMMSSHL…KDGAYENSQL (195 aa)) the chain is on the cytoplasmic side. Disordered stretches follow at residues 282-306 (GIYV…GSLN) and 319-362 (HLQS…NSQL). Residues 319-337 (HLQSETKSIDTESQGSSHF) show a composition bias toward polar residues.

Post-translationally, glycosylated.

It localises to the cell membrane. Its function is as follows. Component of the elastin-associated microfibrils. The protein is Microfibril-associated glycoprotein 3 (MFAP3) of Pongo abelii (Sumatran orangutan).